The chain runs to 461 residues: Flavin-containing monooxygenase FMO GS-OX-like 8 (461 aa).

20–25 (GAGPSG) is an FAD binding site. Position 220-225 (220-225 (GCSMSG)) interacts with NADP(+).

The protein belongs to the FMO family. As to quaternary structure, interacts with EER5. The cofactor is FAD.

In terms of biological role, catalyzes the conversion of methylthioalkyl glucosinolates of any chain length into methylsulfinylalkyl glucosinolates. This Arabidopsis thaliana (Mouse-ear cress) protein is Flavin-containing monooxygenase FMO GS-OX-like 8.